Here is a 493-residue protein sequence, read N- to C-terminus: Non-cyanogenic beta-glucosidase (493 aa).

The signal sequence occupies residues 1-18 (MDFIVAIFALFVISSFTI). The N-linked (GlcNAc...) asparagine glycan is linked to asparagine 34. A beta-D-glucoside-binding positions include glutamine 54, histidine 158, and 203–204 (NE). Residue glutamate 204 is the Proton donor of the active site. An N-linked (GlcNAc...) asparagine glycan is attached at asparagine 335. Tyrosine 346 is a binding site for a beta-D-glucoside. 2 N-linked (GlcNAc...) asparagine glycosylation sites follow: asparagine 371 and asparagine 412. A beta-D-glucoside-binding positions include glutamate 422, tryptophan 471, 478 to 479 (EW), and phenylalanine 487. Glutamate 422 serves as the catalytic Nucleophile.

The protein belongs to the glycosyl hydrolase 1 family. In terms of tissue distribution, leaves.

It carries out the reaction Hydrolysis of terminal, non-reducing beta-D-glucosyl residues with release of beta-D-glucose.. This Trifolium repens (Creeping white clover) protein is Non-cyanogenic beta-glucosidase.